A 474-amino-acid polypeptide reads, in one-letter code: 3-isopropylmalate dehydratase large subunit (474 aa).

[4Fe-4S] cluster is bound by residues cysteine 355, cysteine 415, and cysteine 418.

This sequence belongs to the aconitase/IPM isomerase family. LeuC type 1 subfamily. Heterodimer of LeuC and LeuD. It depends on [4Fe-4S] cluster as a cofactor.

The enzyme catalyses (2R,3S)-3-isopropylmalate = (2S)-2-isopropylmalate. It participates in amino-acid biosynthesis; L-leucine biosynthesis; L-leucine from 3-methyl-2-oxobutanoate: step 2/4. Its function is as follows. Catalyzes the isomerization between 2-isopropylmalate and 3-isopropylmalate, via the formation of 2-isopropylmaleate. This Shewanella sp. (strain ANA-3) protein is 3-isopropylmalate dehydratase large subunit.